Consider the following 436-residue polypeptide: 3-ketoacyl-CoA thiolase (436 aa).

Catalysis depends on Cys99, which acts as the Acyl-thioester intermediate. Residues His392 and Cys422 each act as proton acceptor in the active site.

This sequence belongs to the thiolase-like superfamily. Thiolase family. In terms of assembly, heterotetramer of two alpha chains (FadJ) and two beta chains (FadI).

It localises to the cytoplasm. The enzyme catalyses an acyl-CoA + acetyl-CoA = a 3-oxoacyl-CoA + CoA. Its pathway is lipid metabolism; fatty acid beta-oxidation. Catalyzes the final step of fatty acid oxidation in which acetyl-CoA is released and the CoA ester of a fatty acid two carbons shorter is formed. This chain is 3-ketoacyl-CoA thiolase, found in Salmonella paratyphi A (strain AKU_12601).